Consider the following 303-residue polypeptide: UDP-3-O-acyl-N-acetylglucosamine deacetylase (303 aa).

Zn(2+) contacts are provided by His-78, His-237, and Asp-241. His-264 functions as the Proton donor in the catalytic mechanism.

The protein belongs to the LpxC family. The cofactor is Zn(2+).

The enzyme catalyses a UDP-3-O-[(3R)-3-hydroxyacyl]-N-acetyl-alpha-D-glucosamine + H2O = a UDP-3-O-[(3R)-3-hydroxyacyl]-alpha-D-glucosamine + acetate. It participates in glycolipid biosynthesis; lipid IV(A) biosynthesis; lipid IV(A) from (3R)-3-hydroxytetradecanoyl-[acyl-carrier-protein] and UDP-N-acetyl-alpha-D-glucosamine: step 2/6. In terms of biological role, catalyzes the hydrolysis of UDP-3-O-myristoyl-N-acetylglucosamine to form UDP-3-O-myristoylglucosamine and acetate, the committed step in lipid A biosynthesis. This Pseudomonas entomophila (strain L48) protein is UDP-3-O-acyl-N-acetylglucosamine deacetylase.